Consider the following 275-residue polypeptide: Ovocalyxin-32 (275 aa).

Positions 1–23 are cleaved as a signal peptide; that stretch reads MPGLRAALPAALLLLSSFPPAAA. Cystatin LXN-type domains are found at residues 32–131 and 151–255; these read PGVM…NKKQ and TANY…GLED. The disordered stretch occupies residues 254–275; the sequence is EDGSGQDSGSAAGTSHETKGNF. Residues 256-268 show a composition bias toward low complexity; sequence GSGQDSGSAAGTS.

Belongs to the protease inhibitor I47 (latexin) family. As to expression, expressed at high levels in the uterine and isthmus regions of the oviduct, and concentrated in the eggshell.

The protein resides in the secreted. Component of the matrix of the eggshell. This is Ovocalyxin-32 from Gallus gallus (Chicken).